Consider the following 287-residue polypeptide: Bifunctional protein FolD (287 aa).

NADP(+) contacts are provided by residues 165–167, S190, and I233; that span reads NRS.

The protein belongs to the tetrahydrofolate dehydrogenase/cyclohydrolase family. As to quaternary structure, homodimer.

It catalyses the reaction (6R)-5,10-methylene-5,6,7,8-tetrahydrofolate + NADP(+) = (6R)-5,10-methenyltetrahydrofolate + NADPH. It carries out the reaction (6R)-5,10-methenyltetrahydrofolate + H2O = (6R)-10-formyltetrahydrofolate + H(+). The protein operates within one-carbon metabolism; tetrahydrofolate interconversion. Catalyzes the oxidation of 5,10-methylenetetrahydrofolate to 5,10-methenyltetrahydrofolate and then the hydrolysis of 5,10-methenyltetrahydrofolate to 10-formyltetrahydrofolate. In Nitrosopumilus maritimus (strain SCM1), this protein is Bifunctional protein FolD.